A 227-amino-acid polypeptide reads, in one-letter code: MEALKKIAGVTAAQYVTDGMTIGLGTGSTAYYFVEEIGRRVKQEGLQVVGVTTSSVTSKQAEGLGIPLKSIDDIDSIDLTVDGADEVDKDFNGIKGGGAALLMEKIVATPTKEYIWVVDASKMVEHLGAFKLPVEVVQYGADRLFRVFEKAGYKPSFRMKGDSRLVTDMQNYIIDLDLGCIKDPVAFGHLLDGTVGVVEHGLFNGMVDKVIVASKDGVTVLEAPKAS.

Substrate is bound by residues 26–29, 82–85, and 95–98; these read TGST, DGAD, and KGGG. Residue Glu104 is the Proton acceptor of the active site. Residue Lys122 participates in substrate binding.

This sequence belongs to the ribose 5-phosphate isomerase family. Homodimer.

It carries out the reaction aldehydo-D-ribose 5-phosphate = D-ribulose 5-phosphate. Its pathway is carbohydrate degradation; pentose phosphate pathway; D-ribose 5-phosphate from D-ribulose 5-phosphate (non-oxidative stage): step 1/1. Catalyzes the reversible conversion of ribose-5-phosphate to ribulose 5-phosphate. In Streptococcus pyogenes serotype M2 (strain MGAS10270), this protein is Ribose-5-phosphate isomerase A.